A 232-amino-acid chain; its full sequence is Orotidine 5'-phosphate decarboxylase (232 aa).

Substrate contacts are provided by residues Asp-13, Lys-35, 62–71 (DLKFHDIPNT), Thr-122, Arg-182, Gln-191, Gly-211, and Arg-212. Residue Lys-64 is the Proton donor of the active site.

Belongs to the OMP decarboxylase family. Type 1 subfamily. In terms of assembly, homodimer.

It carries out the reaction orotidine 5'-phosphate + H(+) = UMP + CO2. It functions in the pathway pyrimidine metabolism; UMP biosynthesis via de novo pathway; UMP from orotate: step 2/2. Functionally, catalyzes the decarboxylation of orotidine 5'-monophosphate (OMP) to uridine 5'-monophosphate (UMP). This is Orotidine 5'-phosphate decarboxylase from Pseudomonas savastanoi pv. phaseolicola (strain 1448A / Race 6) (Pseudomonas syringae pv. phaseolicola (strain 1448A / Race 6)).